The primary structure comprises 585 residues: Chaperonin CPN60-like 1, mitochondrial (585 aa).

Residues 1–32 constitute a mitochondrion transit peptide; sequence MYRLVSNVASKARIARKCTSQIGSRLNSTRNY.

Belongs to the chaperonin (HSP60) family.

Its subcellular location is the mitochondrion. Its function is as follows. Implicated in mitochondrial protein import and macromolecular assembly. May facilitate the correct folding of imported proteins. May also prevent misfolding and promote the refolding and proper assembly of unfolded polypeptides generated under stress conditions in the mitochondrial matrix. The protein is Chaperonin CPN60-like 1, mitochondrial of Arabidopsis thaliana (Mouse-ear cress).